Here is a 231-residue protein sequence, read N- to C-terminus: Axial regulator YABBY 4 (231 aa).

The C4-type zinc-finger motif lies at 26-53 (CGFCTTILLVSVPFTSLSMVVTVRCGHC). Disordered regions lie at residues 98-120 (KVNQEKENSPTTLVSSSDNEDED) and 211-231 (NNGFRERKAQRHSIWGKSPFE).

Belongs to the YABBY family. In terms of assembly, interacts with SPL/NZZ.

Its subcellular location is the nucleus. In terms of biological role, essential for the formation and the abaxial-adaxial asymmetric growth of the ovule outer integument. This chain is Axial regulator YABBY 4 (YAB4), found in Arabidopsis thaliana (Mouse-ear cress).